The following is a 484-amino-acid chain: Probable metalloprotease ARX1 (484 aa).

Belongs to the peptidase M24 family. In terms of assembly, component of the nucleoplasmic and cytoplasmic pre-60S ribosomal particles.

It is found in the cytoplasm. Its subcellular location is the nucleus. Functionally, probable metalloprotease involved in proper assembly of pre-ribosomal particles during the biogenesis of the 60S ribosomal subunit. Accompanies the pre-60S particles to the cytoplasm. This chain is Probable metalloprotease ARX1 (ARX1), found in Yarrowia lipolytica (strain CLIB 122 / E 150) (Yeast).